A 2812-amino-acid chain; its full sequence is Polyunsaturated fatty acid synthase subunit A (2812 aa).

The Ketosynthase family 3 (KS3) domain maps to 12–472 (DTRIAVIGMS…GANYHAVLEE (461 aa)). Residues C213, H348, and H390 each act as for beta-ketoacyl synthase activity in the active site. The Malonyl-CoA:ACP transacylase (MAT) domain maps to 602-913 (LFSGQGAQYT…TVSVNPASGK (312 aa)). Residues 1000-1048 (DEEAKREAARLQKQLEDAQRQLDEAKRAADEANQKLAAAKEEAKSAAAS) adopt a coiled-coil conformation. 3 Carrier domains span residues 1114–1193 (ALLA…KAEI), 1232–1308 (ERAE…KAEI), and 1342–1418 (AKAE…KAEI). O-(pantetheine 4'-phosphoryl)serine occurs at positions 1152, 1267, and 1377. The disordered stretch occupies residues 1422 to 1442 (SAPAPAAAAPAPAAPAPAAAA). Low complexity predominate over residues 1423-1442 (APAPAAAAPAPAAPAPAAAA). The Carrier 4 domain maps to 1455–1531 (AKAETVVMEV…EVVDAMKAEI (77 aa)). S1490 carries the O-(pantetheine 4'-phosphoryl)serine modification. The interval 1535–1555 (SAPAPAAAAPAPAAPAPAAAA) is disordered. The span at 1536-1555 (APAPAAAAPAPAAPAPAAAA) shows a compositional bias: low complexity. 4 Carrier domains span residues 1568–1644 (AKAE…KAEI), 1681–1757 (AKAE…KAEI), 1792–1868 (AKAE…KAEI), and 1903–1979 (AKAE…KAEI). O-(pantetheine 4'-phosphoryl)serine is present on residues S1603, S1716, S1827, and S1938. The region spanning 2257–2484 (VVSGGARGIT…VKSICFGPWD (228 aa)) is the Ketoreductase (KR) domain. Residues 2524–2651 (EILVGNWRTP…RAVVVLSSQG (128 aa)) form an N-terminal hotdog fold region. Residues 2524 to 2812 (EILVGNWRTP…SVIATDSLAF (289 aa)) form the PKS/mFAS DH domain. Positions 2540–2800 (ETITLHRKIS…NEQGDLFIDV (261 aa)) are dehydratase (DH) domain. The active-site Proton acceptor; for dehydratase activity is the H2559. The segment at 2666 to 2812 (ADPAAQSAVY…SVIATDSLAF (147 aa)) is C-terminal hotdog fold. D2730 serves as the catalytic Proton donor; for dehydratase activity.

Component of the polyunsaturated fatty acid synthase complex composed of at least ORF-A, ORF-B and ORF-C. It depends on pantetheine 4'-phosphate as a cofactor.

It functions in the pathway lipid metabolism; fatty acid biosynthesis. Poliketide synthase-like protein; part of the polyunsaturated fatty acid synthase composed of the 3 PKS-like subunits A, B and C. While the saturated fatty acids (SFAs) in Thraustochytrium are produced by the conventional fatty acid synthase (FAS) pathway, polyunsaturated fatty acids (PUFAs) including docosahexeanoic acid (DHA) and docosapentaenoic acid (DPA) are synthesized via an anaerobical PKS pathway. PUFA synthase assimilates fatty acyl-CoA, the product of FAS, as the starter unit to synthesize DPA, and this starter unit may be butyryl-CoA, hexanoyl-CoA, or octanoyl-CoA. DPA and DHA biosynthesis seem to differ by the reduction at the N-3 position by PUFA synthase, not the extension of carbon chain. In DHA biosynthesis, PUFA synthase extends the fatty acyl chain from the methyl toward the carboxyl end, and the double bond is formed when the carbon chain is growing, instead of afterward. Therefore, PUFA synthase is unable to transform DPA to DHA, suggesting that DPA is not the precursor of DHA. Moreover, DPA molecule is partly extended by FAS KS domain, so DPA biosynthesis is less dependent on PUFA synthase KS domain than DHA. This Thraustochytrium sp. (strain ATCC 26185 / S-3) protein is Polyunsaturated fatty acid synthase subunit A.